Reading from the N-terminus, the 197-residue chain is Recombination protein RecR (197 aa).

The segment at 57 to 72 (CSVCFGITEDDPCRFC) adopts a C4-type zinc-finger fold. Residues 79 to 174 (GAICVVEEPQ…RVTRLAHGIP (96 aa)) form the Toprim domain.

The protein belongs to the RecR family.

In terms of biological role, may play a role in DNA repair. It seems to be involved in an RecBC-independent recombinational process of DNA repair. It may act with RecF and RecO. This is Recombination protein RecR from Geobacter sulfurreducens (strain ATCC 51573 / DSM 12127 / PCA).